Reading from the N-terminus, the 163-residue chain is Putative pre-16S rRNA nuclease (163 aa).

The protein belongs to the YqgF nuclease family.

It localises to the cytoplasm. Could be a nuclease involved in processing of the 5'-end of pre-16S rRNA. The polypeptide is Putative pre-16S rRNA nuclease (Rhizobium leguminosarum bv. trifolii (strain WSM2304)).